The chain runs to 399 residues: MIIKPRVRGFICVTAHPAGCEANVKKQIDYVTTEGPIANGPKRVLVIGASTGYGLAARITAAFGCGADTLGVFFERPGEEGKPGTSGWYNSAAFHKFAAQKGLYAKSINGDAFSDEIKQLTIDAIKQDLGQVDQVIYSLASPRRTHPKTGEVFNSTLKPIGNAVNLRGLDTDKEVIKESVLQPATQSEIDSTVAVMGGEDWQMWIDALLDAGVLAEGAQTTAFTYLGEKITHDIYWNGSIGAAKKDLDQKVLAIRESLAAHGGGDARVSVLKAVVTQASSAIPMMPLYLSLLFKVMKEKGTHEGCIEQVYSLYKDSLCGDSPHMDQEGRLRADYKELDPEVQNQVQQLWDQVTNDNIYLLTDFVGYKSEFLNLFGFGIDGVDYDADVNPDVKIPNLIQG.

NAD(+) contacts are provided by residues 48 to 53 (GASTGY), 74 to 75 (FE), 111 to 112 (DA), and 139 to 140 (LA). Tyr225 provides a ligand contact to substrate. Catalysis depends on Tyr235, which acts as the Proton donor. NAD(+) contacts are provided by residues Lys244 and 274–276 (VVT).

The protein belongs to the TER reductase family. In terms of assembly, monomer.

The enzyme catalyses a 2,3-saturated acyl-[ACP] + NAD(+) = a (2E)-enoyl-[ACP] + NADH + H(+). Its pathway is lipid metabolism; fatty acid biosynthesis. Its function is as follows. Involved in the final reduction of the elongation cycle of fatty acid synthesis (FAS II). Catalyzes the reduction of a carbon-carbon double bond in an enoyl moiety that is covalently linked to an acyl carrier protein (ACP). This Yersinia pseudotuberculosis serotype O:1b (strain IP 31758) protein is Enoyl-[acyl-carrier-protein] reductase [NADH].